We begin with the raw amino-acid sequence, 517 residues long: Ribose import ATP-binding protein RbsA (517 aa).

2 consecutive ABC transporter domains span residues 11–251 and 263–507; these read LEMR…VGRD and YDPG…ALAT. Position 43 to 50 (43 to 50) interacts with ATP; sequence GENGAGKS.

The protein belongs to the ABC transporter superfamily. Ribose importer (TC 3.A.1.2.1) family. The complex is composed of an ATP-binding protein (RbsA), two transmembrane proteins (RbsC) and a solute-binding protein (RbsB).

The protein localises to the cell inner membrane. The catalysed reaction is D-ribose(out) + ATP + H2O = D-ribose(in) + ADP + phosphate + H(+). Functionally, part of the ABC transporter complex RbsABC involved in ribose import. Responsible for energy coupling to the transport system. This chain is Ribose import ATP-binding protein RbsA, found in Burkholderia pseudomallei (strain K96243).